The following is a 293-amino-acid chain: Elongation factor Ts (293 aa).

Residues 80 to 83 are involved in Mg(2+) ion dislocation from EF-Tu; that stretch reads TDFV.

This sequence belongs to the EF-Ts family.

It localises to the cytoplasm. Functionally, associates with the EF-Tu.GDP complex and induces the exchange of GDP to GTP. It remains bound to the aminoacyl-tRNA.EF-Tu.GTP complex up to the GTP hydrolysis stage on the ribosome. The polypeptide is Elongation factor Ts (Herminiimonas arsenicoxydans).